The primary structure comprises 29 residues: Scolopendra 8011.73 Da toxin (29 aa).

As to expression, expressed by the venom gland.

The protein localises to the secreted. The polypeptide is Scolopendra 8011.73 Da toxin (Scolopendra viridicornis nigra (Brazilian giant centipede)).